The sequence spans 662 residues: Methionine--tRNA ligase (662 aa).

The 'HIGH' region motif lies at 13 to 23 (PYTNGPCHLGH). Zn(2+) is bound by residues cysteine 144, cysteine 147, cysteine 156, and cysteine 160. The short motif at 326 to 330 (KFSKS) is the 'KMSKS' region element. Lysine 329 is an ATP binding site. Positions 564–662 (DFSKVEIKTG…KPVEPGTKIR (99 aa)) constitute a tRNA-binding domain.

It belongs to the class-I aminoacyl-tRNA synthetase family. MetG type 1 subfamily. As to quaternary structure, homodimer. Zn(2+) is required as a cofactor.

Its subcellular location is the cytoplasm. It carries out the reaction tRNA(Met) + L-methionine + ATP = L-methionyl-tRNA(Met) + AMP + diphosphate. Is required not only for elongation of protein synthesis but also for the initiation of all mRNA translation through initiator tRNA(fMet) aminoacylation. This is Methionine--tRNA ligase from Methanoregula boonei (strain DSM 21154 / JCM 14090 / 6A8).